The chain runs to 529 residues: Probable bifunctional tRNA threonylcarbamoyladenosine biosynthesis protein (529 aa).

The interval 1–324 (MIVLGLEGTA…FRIDEVDAPW (324 aa)) is kae1. Residues H107, H111, and Y128 each coordinate Fe cation. L-threonylcarbamoyladenylate contacts are provided by residues 128 to 132 (YVSGG), D160, G173, E177, and N257. Position 285 (D285) interacts with Fe cation. The 201-residue stretch at 329–529 (SRKDYGKAGA…SAIRRRHRYV (201 aa)) folds into the Protein kinase domain. ATP-binding positions include 335 to 342 (KAGAESRI) and K355. Catalysis depends on D447, which acts as the Proton acceptor; for kinase activity.

This sequence in the N-terminal section; belongs to the KAE1 / TsaD family. The protein in the C-terminal section; belongs to the protein kinase superfamily. Tyr protein kinase family. BUD32 subfamily. Component of the KEOPS complex that consists of Kae1, Bud32, Cgi121 and Pcc1; the whole complex dimerizes. Fe(2+) is required as a cofactor.

The protein resides in the cytoplasm. It catalyses the reaction L-seryl-[protein] + ATP = O-phospho-L-seryl-[protein] + ADP + H(+). The catalysed reaction is L-threonyl-[protein] + ATP = O-phospho-L-threonyl-[protein] + ADP + H(+). It carries out the reaction L-threonylcarbamoyladenylate + adenosine(37) in tRNA = N(6)-L-threonylcarbamoyladenosine(37) in tRNA + AMP + H(+). Its function is as follows. Required for the formation of a threonylcarbamoyl group on adenosine at position 37 (t(6)A37) in tRNAs that read codons beginning with adenine. Is a component of the KEOPS complex that is probably involved in the transfer of the threonylcarbamoyl moiety of threonylcarbamoyl-AMP (TC-AMP) to the N6 group of A37. The Kae1 domain likely plays a direct catalytic role in this reaction. The Bud32 domain probably displays kinase activity that regulates Kae1 function. The chain is Probable bifunctional tRNA threonylcarbamoyladenosine biosynthesis protein from Thermoplasma acidophilum (strain ATCC 25905 / DSM 1728 / JCM 9062 / NBRC 15155 / AMRC-C165).